Reading from the N-terminus, the 276-residue chain is Dermonecrotic toxin LlSicTox-alphaIV3 (276 aa).

His5 is a catalytic residue. Mg(2+) is bound by residues Glu25 and Asp27. Residue His41 is the Nucleophile of the active site. 2 disulfide bridges follow: Cys45–Cys51 and Cys47–Cys192. Asp85 provides a ligand contact to Mg(2+).

This sequence belongs to the arthropod phospholipase D family. Class II subfamily. Mg(2+) serves as cofactor. Expressed by the venom gland.

It is found in the secreted. The enzyme catalyses an N-(acyl)-sphingosylphosphocholine = an N-(acyl)-sphingosyl-1,3-cyclic phosphate + choline. The catalysed reaction is an N-(acyl)-sphingosylphosphoethanolamine = an N-(acyl)-sphingosyl-1,3-cyclic phosphate + ethanolamine. It catalyses the reaction a 1-acyl-sn-glycero-3-phosphocholine = a 1-acyl-sn-glycero-2,3-cyclic phosphate + choline. It carries out the reaction a 1-acyl-sn-glycero-3-phosphoethanolamine = a 1-acyl-sn-glycero-2,3-cyclic phosphate + ethanolamine. Dermonecrotic toxins cleave the phosphodiester linkage between the phosphate and headgroup of certain phospholipids (sphingolipid and lysolipid substrates), forming an alcohol (often choline) and a cyclic phosphate. This toxin acts on sphingomyelin (SM). It may also act on ceramide phosphoethanolamine (CPE), lysophosphatidylcholine (LPC) and lysophosphatidylethanolamine (LPE), but not on lysophosphatidylserine (LPS), and lysophosphatidylglycerol (LPG). It acts by transphosphatidylation, releasing exclusively cyclic phosphate products as second products. Induces dermonecrosis, hemolysis, increased vascular permeability, edema, inflammatory response, and platelet aggregation. The protein is Dermonecrotic toxin LlSicTox-alphaIV3 of Loxosceles laeta (South American recluse spider).